Here is a 131-residue protein sequence, read N- to C-terminus: Global transcriptional regulator Spx (131 aa).

Cys10 and Cys13 are joined by a disulfide.

Belongs to the ArsC family. Spx subfamily. In terms of assembly, interacts with the C-terminal domain of the alpha subunit of the RNAP.

Its subcellular location is the cytoplasm. Global transcriptional regulator that plays a key role in stress response and exerts either positive or negative regulation of genes. Acts by interacting with the C-terminal domain of the alpha subunit of the RNA polymerase (RNAP). This interaction can enhance binding of RNAP to the promoter region of target genes and stimulate their transcription, or block interaction of RNAP with activator. This is Global transcriptional regulator Spx from Staphylococcus haemolyticus (strain JCSC1435).